Reading from the N-terminus, the 4114-residue chain is Ferrichrome siderophore peptide synthetase (4114 aa).

Carrier domains follow at residues 797–874, 1947–2021, 3020–3093, and 3574–3650; these read DPAT…QSSG, TDSE…IDKL, TQSE…MQSS, and QALS…SQTN. An O-(pantetheine 4'-phosphoryl)serine mark is found at S835, S1982, S3054, and S3611. Residues 4040–4061 are disordered; the sequence is LDYSHHSQHSTHDRTPPSTPHV. The segment covering 4041–4054 has biased composition (basic and acidic residues); the sequence is DYSHHSQHSTHDRT.

The protein belongs to the ATP-dependent AMP-binding enzyme family. It depends on pantetheine 4'-phosphate as a cofactor.

Its pathway is siderophore biosynthesis; ferrichrome biosynthesis. In terms of biological role, multidomain peptide synthetase involved in ferrichrome biosynthesis. This Mycosarcoma maydis (Corn smut fungus) protein is Ferrichrome siderophore peptide synthetase (SID2).